The primary structure comprises 156 residues: Riboflavin synthase (156 aa).

It belongs to the DMRL synthase family.

The enzyme catalyses 2 6,7-dimethyl-8-(1-D-ribityl)lumazine + H(+) = 5-amino-6-(D-ribitylamino)uracil + riboflavin. The protein operates within cofactor biosynthesis; riboflavin biosynthesis; riboflavin from 2-hydroxy-3-oxobutyl phosphate and 5-amino-6-(D-ribitylamino)uracil: step 2/2. The sequence is that of Riboflavin synthase (ribC) from Methanocaldococcus jannaschii (strain ATCC 43067 / DSM 2661 / JAL-1 / JCM 10045 / NBRC 100440) (Methanococcus jannaschii).